The following is an 89-amino-acid chain: Small ribosomal subunit protein uS15 (89 aa).

This sequence belongs to the universal ribosomal protein uS15 family. As to quaternary structure, part of the 30S ribosomal subunit. Forms a bridge to the 50S subunit in the 70S ribosome, contacting the 23S rRNA.

Functionally, one of the primary rRNA binding proteins, it binds directly to 16S rRNA where it helps nucleate assembly of the platform of the 30S subunit by binding and bridging several RNA helices of the 16S rRNA. In terms of biological role, forms an intersubunit bridge (bridge B4) with the 23S rRNA of the 50S subunit in the ribosome. The polypeptide is Small ribosomal subunit protein uS15 (Thermodesulfovibrio yellowstonii (strain ATCC 51303 / DSM 11347 / YP87)).